The primary structure comprises 276 residues: UPF0276 protein AM1_3026 (276 aa).

Belongs to the UPF0276 family.

The protein is UPF0276 protein AM1_3026 of Acaryochloris marina (strain MBIC 11017).